Here is a 169-residue protein sequence, read N- to C-terminus: UPF0398 protein Spy49_1277c (169 aa).

This sequence belongs to the UPF0398 family.

The sequence is that of UPF0398 protein Spy49_1277c from Streptococcus pyogenes serotype M49 (strain NZ131).